A 246-amino-acid polypeptide reads, in one-letter code: Adenosylcobinamide-GDP ribazoletransferase (246 aa).

6 helical membrane passes run 34–54 (IVTF…VALL), 59–79 (CGVP…TGGF), 113–133 (GGLA…ELLL), 136–156 (IHPI…AALL), 181–201 (TLVT…LQGL), and 203–223 (AALI…RTLG).

The protein belongs to the CobS family. Requires Mg(2+) as cofactor.

Its subcellular location is the cell inner membrane. The catalysed reaction is alpha-ribazole + adenosylcob(III)inamide-GDP = adenosylcob(III)alamin + GMP + H(+). It carries out the reaction alpha-ribazole 5'-phosphate + adenosylcob(III)inamide-GDP = adenosylcob(III)alamin 5'-phosphate + GMP + H(+). The protein operates within cofactor biosynthesis; adenosylcobalamin biosynthesis; adenosylcobalamin from cob(II)yrinate a,c-diamide: step 7/7. In terms of biological role, joins adenosylcobinamide-GDP and alpha-ribazole to generate adenosylcobalamin (Ado-cobalamin). Also synthesizes adenosylcobalamin 5'-phosphate from adenosylcobinamide-GDP and alpha-ribazole 5'-phosphate. This is Adenosylcobinamide-GDP ribazoletransferase from Klebsiella pneumoniae subsp. pneumoniae (strain ATCC 700721 / MGH 78578).